Reading from the N-terminus, the 179-residue chain is Cytochrome c-type biogenesis protein CcmE (179 aa).

The Cytoplasmic portion of the chain corresponds to 1–8; the sequence is MTPRRKSR. The helical; Signal-anchor for type II membrane protein transmembrane segment at 9 to 29 threads the bilayer; the sequence is MTVILFVLLGISIASALVLYA. The Periplasmic portion of the chain corresponds to 30 to 179; it reads LRQNIDLFYT…QKTSMQEGQK (150 aa). The heme site is built by His131 and Tyr135. The interval 151–179 is disordered; the sequence is MGVADLKGESERDRQEKAYQKTSMQEGQK. Over residues 156-169 the composition is skewed to basic and acidic residues; it reads LKGESERDRQEKAY. Polar residues predominate over residues 170-179; sequence QKTSMQEGQK.

It belongs to the CcmE/CycJ family.

The protein resides in the cell inner membrane. In terms of biological role, heme chaperone required for the biogenesis of c-type cytochromes. Transiently binds heme delivered by CcmC and transfers the heme to apo-cytochromes in a process facilitated by CcmF and CcmH. The sequence is that of Cytochrome c-type biogenesis protein CcmE from Pasteurella multocida (strain Pm70).